The chain runs to 338 residues: Ketol-acid reductoisomerase (NADP(+)) (338 aa).

In terms of domain architecture, KARI N-terminal Rossmann spans 1–181 (MQVYYDKDCD…GGGRTGIIET (181 aa)). NADP(+) is bound by residues 24–27 (YGSQ), R47, S50, S52, and 82–85 (DEFQ). H107 is an active-site residue. An NADP(+)-binding site is contributed by G133. Residues 182–327 (TFKDETETDL…EKLRSMMPWI (146 aa)) form the KARI C-terminal knotted domain. Mg(2+)-binding residues include D190, E194, E226, and E230. S251 is a substrate binding site.

It belongs to the ketol-acid reductoisomerase family. Mg(2+) serves as cofactor.

The enzyme catalyses (2R)-2,3-dihydroxy-3-methylbutanoate + NADP(+) = (2S)-2-acetolactate + NADPH + H(+). It catalyses the reaction (2R,3R)-2,3-dihydroxy-3-methylpentanoate + NADP(+) = (S)-2-ethyl-2-hydroxy-3-oxobutanoate + NADPH + H(+). The protein operates within amino-acid biosynthesis; L-isoleucine biosynthesis; L-isoleucine from 2-oxobutanoate: step 2/4. Its pathway is amino-acid biosynthesis; L-valine biosynthesis; L-valine from pyruvate: step 2/4. Functionally, involved in the biosynthesis of branched-chain amino acids (BCAA). Catalyzes an alkyl-migration followed by a ketol-acid reduction of (S)-2-acetolactate (S2AL) to yield (R)-2,3-dihydroxy-isovalerate. In the isomerase reaction, S2AL is rearranged via a Mg-dependent methyl migration to produce 3-hydroxy-3-methyl-2-ketobutyrate (HMKB). In the reductase reaction, this 2-ketoacid undergoes a metal-dependent reduction by NADPH to yield (R)-2,3-dihydroxy-isovalerate. This chain is Ketol-acid reductoisomerase (NADP(+)), found in Hahella chejuensis (strain KCTC 2396).